The primary structure comprises 162 residues: Large ribosomal subunit protein uL15 (162 aa).

A disordered region spans residues 1-44 (MKLNELRDNPGATKNRIRVGRGIGSGKGKTAGRGVKGQKSREGV). Residues 21–35 (RGIGSGKGKTAGRGV) are compositionally biased toward gly residues.

This sequence belongs to the universal ribosomal protein uL15 family. Part of the 50S ribosomal subunit.

Its function is as follows. Binds to the 23S rRNA. In Rhodospirillum rubrum (strain ATCC 11170 / ATH 1.1.1 / DSM 467 / LMG 4362 / NCIMB 8255 / S1), this protein is Large ribosomal subunit protein uL15.